The following is a 666-amino-acid chain: ESX-1 secretion-associated protein EspI (666 aa).

Residues 1-15 (MAADYDKLFRPHEGM) are compositionally biased toward basic and acidic residues. The disordered stretch occupies residues 1-378 (MAADYDKLFR…ATKPPKVVSQ (378 aa)). The segment covering 22–31 (AAQPFFDPSA) has biased composition (low complexity). Pro residues-rich tracts occupy residues 64–80 (APPPPPPPPPPPPPTPM), 87–144 (PPSP…PAPT), and 188–205 (PAPPWAKMPIGEPPPAPS). The segment covering 222-231 (HSRRARRGHR) has biased composition (basic residues). Positions 284–297 (PTRPAPTEPPPSPS) are enriched in pro residues. Residues 357–371 (PKVKKVKPQKPKATK) show a composition bias toward basic residues. ATP is bound at residue 424–431 (LKGGAGKT).

Functionally, required to repress ESX-1-mediated secretion under low ATP conditions. This function requires the ATP-binding motif. The sequence is that of ESX-1 secretion-associated protein EspI from Mycobacterium tuberculosis (strain CDC 1551 / Oshkosh).